We begin with the raw amino-acid sequence, 47 residues long: GTGPVADLHIINKDLSPDGFQRPTVVAGGGRDVVSIGRAGDNVTIRF.

Residues 2–47 enclose the Plastocyanin-like domain; sequence TGPVADLHIINKDLSPDGFQRPTVVAGGGRDVVSIGRAGDNVTIRF.

This sequence belongs to the multicopper oxidase family. In terms of assembly, homodimer. The cofactor is Cu cation. In terms of processing, N-glycosylated; contains 17% carbohydrates.

It is found in the secreted. The enzyme catalyses 4 hydroquinone + O2 = 4 benzosemiquinone + 2 H2O. Inhibited by sodium azide, SDS and mercaptoethanol, but not by 4-hexyl resocinol, L-cysteine and dithiothreitol. Activity is inhibited by the heavy metal ions Cr, W, Sn, Ag(+) and Hg(2+), but not by Pb(2+), Fe(3+), Ni(2+), Li(2+), Co(2+) or Cd(2+). Its function is as follows. Lignin degradation and detoxification of lignin-derived products. Has highest activity towards ABTS, also active towards ferulic acid and guaiacol, but is not active towards tyrosine, vanillic acid, 2,5-dimethyl aniline, p-anisidine or violuric acid. The polypeptide is Laccase-2d (Cerrena unicolor (Canker rot fungus)).